Reading from the N-terminus, the 258-residue chain is Enterotoxin type D (258 aa).

The signal sequence occupies residues 1–25; the sequence is MKKFNILIALLFFTSLVISPLNVKA. 4 residues coordinate Zn(2+): D212, H248, H250, and D252.

The protein belongs to the staphylococcal/streptococcal toxin family. In terms of assembly, homodimer; zinc-dependent. Interacts with MHC class II molecules composed of alpha/HLA-DRA and beta/HLA-DRB1 chains. The cofactor is Zn(2+).

Its subcellular location is the secreted. Its function is as follows. Staphylococcal enterotoxin that activates the host immune system by binding as unprocessed molecules to major histocompatibility (MHC) complex class II and T-cell receptor (TCR) molecules. In turn, this ternary complex activates a large number of T-lymphocytes initiating a systemic release of pro-inflammatory cytokines. In addition, induces B-cell proliferation and differentiation in the presence of T-cells. Causes also the intoxication staphylococcal food poisoning syndrome. In Staphylococcus aureus, this protein is Enterotoxin type D (entD).